A 440-amino-acid chain; its full sequence is Thymidine phosphorylase (440 aa).

The protein belongs to the thymidine/pyrimidine-nucleoside phosphorylase family. In terms of assembly, homodimer.

The catalysed reaction is thymidine + phosphate = 2-deoxy-alpha-D-ribose 1-phosphate + thymine. It participates in pyrimidine metabolism; dTMP biosynthesis via salvage pathway; dTMP from thymine: step 1/2. In terms of biological role, the enzymes which catalyze the reversible phosphorolysis of pyrimidine nucleosides are involved in the degradation of these compounds and in their utilization as carbon and energy sources, or in the rescue of pyrimidine bases for nucleotide synthesis. The chain is Thymidine phosphorylase from Rhizobium meliloti (strain 1021) (Ensifer meliloti).